The chain runs to 63 residues: Hirudin (63 aa).

The tract at residues 1 to 3 is interaction with thrombin active site; sequence VVY. 3 disulfide bridges follow: C6-C14, C16-C28, and C22-C39. The tract at residues 39 to 63 is disordered; sequence CVTGEGTPGPQSHNDGDFEEPEEYL. An O-linked (GalNAc...) threonine glycan is attached at T45. The interval 55 to 63 is interaction with fibrinogen-binding exosite of thrombin; it reads DFEEPEEYL. Y62 carries the sulfotyrosine modification.

Belongs to the protease inhibitor I14 (hirudin) family.

Its subcellular location is the secreted. Functionally, hirudin is a potent thrombin-specific protease inhibitor. It forms a stable non-covalent complex with alpha-thrombin, thereby abolishing its ability to cleave fibrinogen. The sequence is that of Hirudin from Poecilobdella viridis (Indian freshwater leech).